The sequence spans 282 residues: Putative 4-diphosphocytidyl-2-C-methyl-D-erythritol kinase (282 aa).

Residue Lys-9 is part of the active site. 93-103 (PVSAGLAGGSA) contributes to the ATP binding site. Residue Asp-135 is part of the active site.

Belongs to the GHMP kinase family. IspE subfamily.

The catalysed reaction is 4-CDP-2-C-methyl-D-erythritol + ATP = 4-CDP-2-C-methyl-D-erythritol 2-phosphate + ADP + H(+). Catalyzes the phosphorylation of the position 2 hydroxy group of 4-diphosphocytidyl-2C-methyl-D-erythritol. This Staphylococcus aureus (strain MSSA476) protein is Putative 4-diphosphocytidyl-2-C-methyl-D-erythritol kinase.